The primary structure comprises 290 residues: MFQGSIVAIVTPFKNGAVDEEKLRELVEFQIENGTDAIVPCGTTGESSTLSYVEHDRVIQVVVEQVNKRVPVIAGTGSNSTHEAIEITQHAKELGADGALLVTPYYNKPSQEGLFRHYKAVADAVALPQILYNVPGRTGVNLLPETVARLSVHQNIVAIKEATGSLQQASEVLALCGDKIDVLSGDDFITLPIMAAGGKGVISVTANIMPKEVSSLVDAFNAGNLEEARRLHLYLLKISNAMFIESNPVPVKAAVSLMGKCSSEVRLPLAPLMEANLAKLTAIMKEYKLI.

Threonine 44 provides a ligand contact to pyruvate. Residue tyrosine 132 is the Proton donor/acceptor of the active site. The active-site Schiff-base intermediate with substrate is lysine 160. Isoleucine 202 provides a ligand contact to pyruvate.

It belongs to the DapA family. In terms of assembly, homotetramer; dimer of dimers.

The protein localises to the cytoplasm. It carries out the reaction L-aspartate 4-semialdehyde + pyruvate = (2S,4S)-4-hydroxy-2,3,4,5-tetrahydrodipicolinate + H2O + H(+). It functions in the pathway amino-acid biosynthesis; L-lysine biosynthesis via DAP pathway; (S)-tetrahydrodipicolinate from L-aspartate: step 3/4. Functionally, catalyzes the condensation of (S)-aspartate-beta-semialdehyde [(S)-ASA] and pyruvate to 4-hydroxy-tetrahydrodipicolinate (HTPA). The sequence is that of 4-hydroxy-tetrahydrodipicolinate synthase from Geobacter sp. (strain M21).